The primary structure comprises 443 residues: Fatty acid desaturase 3 (443 aa).

Residues 1–130 (MGGVGEPDWE…EDMKLFEAKP (130 aa)) lie on the Cytoplasmic side of the membrane. A Cytochrome b5 heme-binding domain is found at 18–95 (LPTLRWEQVR…LQPLLIGELA (78 aa)). The chain crosses the membrane as a helical span at residues 131 to 151 (AFFGLLLGHILAMEVLAWLMI). Position 152 (Y152) is a topological domain, lumenal. A helical transmembrane segment spans residues 153-173 (MLGPGWVPSTLAALILAISQA). The Cytoplasmic portion of the chain corresponds to 174-259 (QSWCLQHDLG…KKKRRYLPYN (86 aa)). The short motif at 180-184 (HDLGH) is the Histidine box-1 element. The short motif at 217–221 (HFQHH) is the Histidine box-2 element. The helical transmembrane segment at 260 to 280 (HQHLYFFLIGPPLLTLVNFEV) threads the bilayer. Over 281-282 (EN) the chain is Lumenal. Residues 283–303 (LAYMLVCMQWMDLLWAASFYA) form a helical membrane-spanning segment. A topological domain (cytoplasmic) is located at residue R304. A helical membrane pass occupies residues 305–325 (FLLSYIPFYGIPGALLLFVAV). Over 326–443 (RVLESHWFVW…NVWLEAYLHQ (118 aa)) the chain is Lumenal. The Histidine box-3 motif lies at 381 to 385 (QIEHH).

This sequence belongs to the fatty acid desaturase type 1 family.

It is found in the endoplasmic reticulum membrane. It catalyses the reaction an N-acylsphing-4-enine + 2 Fe(II)-[cytochrome b5] + O2 + 2 H(+) = an N-acyl-sphinga-4E,14Z-dienine + 2 Fe(III)-[cytochrome b5] + 2 H2O. The enzyme catalyses N-(hexanoyl)sphing-4-enine + 2 Fe(II)-[cytochrome b5] + O2 + 2 H(+) = N-hexanoyl-sphinga-4E,14Z-dienine + 2 Fe(III)-[cytochrome b5] + 2 H2O. It carries out the reaction sphing-4-enine + 2 Fe(II)-[cytochrome b5] + O2 + 2 H(+) = sphinga-4E,14Z-dienine + 2 Fe(III)-[cytochrome b5] + 2 H2O. The catalysed reaction is (11E)-octadecenoyl-CoA + 2 Fe(II)-[cytochrome b5] + O2 + 2 H(+) = (11E,13Z)-octadecadienoyl-CoA + 2 Fe(III)-[cytochrome b5] + 2 H2O. It catalyses the reaction N-acyl-1-deoxysphinganine + 2 Fe(II)-[cytochrome b5] + O2 + 2 H(+) = N-acyl-1-deoxysphing-14Z-enine + 2 Fe(III)-[cytochrome b5] + 2 H2O. The enzyme catalyses an N-acylsphinganine + 2 Fe(II)-[cytochrome b5] + O2 + 2 H(+) = an N-acylsphing-14Z-enine + 2 Fe(III)-[cytochrome b5] + 2 H2O. It functions in the pathway lipid metabolism; polyunsaturated fatty acid biosynthesis. Its pathway is lipid metabolism; sphingolipid metabolism. Mammals have different sphingoid bases that differ in their length and/or pattern of desaturation and hydroxyl groups. The predominant sphingoid base that comprises mammalian ceramides is sphing-4-enine (sphingosine or SPH) which has a trans (E) desaturation at carbon 4. FADS3 is a desaturase that introduces a cis (Z) double bond between carbon 14 and carbon 15 of the sphingoid base (also known as long chain base, LCB), producing LCBs such as sphinga-4,14-dienine (SPD, d18:2(4E,14Z)) from SPH. Prefers SPH-containing ceramides (N-acylsphing-4-enines) as substrates. Capable of metabolizing also the SPH in its free form. SPD ceramides occur widely in mammalian tissues and cells. Due to their unusual structure containing a cis double bond, SPD ceramides may have an opposite, negative role in lipid microdomain formation relative to conventional ceramides. Could be involved in the detoxification of 1-deoxy sphingolipids, by desaturating the cytotoxic 1-deoxysphinganine (1-deoxySA, m18:0), produced under pathological conditions, to 1-deoxysphingenine (1-deoxysphingosine, 1-deoxySO, m18:1). Although prefers SPH-containing ceramides (N-acylsphing-4-enines) as substrates, it also exhibits activity toward dihydrosphingosine-containing CERs (N-acylsphinganines) and produces 14Z-SPH-containing sphingolipids. Its desaturase mechanism involves an electron transfer facilitated by cytochrome b5. FADS3 also acts as a methyl-end fatty acyl coenzyme A (CoA) desaturase that introduces a cis double bond between the preexisting double bond and the terminal methyl group of the fatty acyl chain. Desaturates (11E)-octadecenoate (trans-vaccenoate, the predominant trans fatty acid in human milk) at carbon 13 to generate (11E,13Z)-octadecadienoate (also known as conjugated linoleic acid 11E,13Z-CLA). This Bos taurus (Bovine) protein is Fatty acid desaturase 3.